The primary structure comprises 242 residues: Segregation and condensation protein A (242 aa).

The protein belongs to the ScpA family. In terms of assembly, component of a cohesin-like complex composed of ScpA, ScpB and the Smc homodimer, in which ScpA and ScpB bind to the head domain of Smc. The presence of the three proteins is required for the association of the complex with DNA.

The protein resides in the cytoplasm. Functionally, participates in chromosomal partition during cell division. May act via the formation of a condensin-like complex containing Smc and ScpB that pull DNA away from mid-cell into both cell halves. The polypeptide is Segregation and condensation protein A (Lactococcus lactis subsp. lactis (strain IL1403) (Streptococcus lactis)).